Reading from the N-terminus, the 358-residue chain is Phenylalanine--tRNA ligase alpha subunit (358 aa).

Glu-258 serves as a coordination point for Mg(2+).

This sequence belongs to the class-II aminoacyl-tRNA synthetase family. Phe-tRNA synthetase alpha subunit type 1 subfamily. As to quaternary structure, tetramer of two alpha and two beta subunits. Requires Mg(2+) as cofactor.

The protein resides in the cytoplasm. It carries out the reaction tRNA(Phe) + L-phenylalanine + ATP = L-phenylalanyl-tRNA(Phe) + AMP + diphosphate + H(+). The chain is Phenylalanine--tRNA ligase alpha subunit from Rhodospirillum centenum (strain ATCC 51521 / SW).